A 313-amino-acid chain; its full sequence is GTP cyclohydrolase 1 (313 aa).

Over residues 1-10 (MAQETTRDGS) the composition is skewed to basic and acidic residues. Residues 1-120 (MAQETTRDGS…SRGTRERLEE (120 aa)) form a disordered region. A compositionally biased stretch (low complexity) spans 11 to 20 (DSPSGSVSPP). The span at 29-39 (KDKKSSKKRAH) shows a compositional bias: basic residues. Basic and acidic residues predominate over residues 40 to 64 (SSGERRSSVSKPARDPSDKPEESPS). A compositionally biased stretch (low complexity) spans 72–102 (TSSTAAAAVPSTITEEVSPSTSVTRSPSPVI). The Zn(2+) site is built by Cys-202, His-205, and Cys-273.

This sequence belongs to the GTP cyclohydrolase I family. In terms of assembly, toroid-shaped homodecamer, composed of two pentamers of five dimers.

The catalysed reaction is GTP + H2O = 7,8-dihydroneopterin 3'-triphosphate + formate + H(+). The protein operates within cofactor biosynthesis; 7,8-dihydroneopterin triphosphate biosynthesis; 7,8-dihydroneopterin triphosphate from GTP: step 1/1. GTP shows a positive allosteric effect, and tetrahydrobiopterin inhibits the enzyme activity. Functionally, GTP cyclohydrolase 1 is the first enzyme in the biosynthetic pathway leading to folic acid. The sequence is that of GTP cyclohydrolase 1 (gch-1) from Neurospora crassa (strain ATCC 24698 / 74-OR23-1A / CBS 708.71 / DSM 1257 / FGSC 987).